The sequence spans 431 residues: Forkhead box protein N2 (431 aa).

The segment at residues 112–208 (KPPYSFSLLI…QALKKQPFSS (97 aa)) is a DNA-binding region (fork-head). A disordered region spans residues 364–387 (DSGYASQPCAKISEKGQSGKKMRK).

Its subcellular location is the nucleus. Its function is as follows. Binds to the purine-rich region in HTLV-I LTR. In Homo sapiens (Human), this protein is Forkhead box protein N2 (FOXN2).